Reading from the N-terminus, the 328-residue chain is MKKVNVVAIGGGTGLSSLLRGLKIEVGRSIGRLSAIVTVADSGGSTGRLRKIYNIPAPGDIRNCIVALSDAEELMQKLFQYRFKGDGLEGHAFGNLFLTALTDITGSFLKAIKETSKILKTKGDIIPSTYENVNLVAEFDDGKVIKGEEEITEYGKKGHKVVNIWLEPKNPKAPEEAIERIKEADLIIIGPGSLFTSILPNFLVPQIREAVKESRALKVFVVNVMTQPGETDNFTAWDHIDTFLKFSGIDLVDVAVVNTQMPSNGLLKKYLEQNQEPVTPDVGRIGREGITVYAENLIGESGDFVRHDPQKLTEVILKILENELLSKV.

This sequence belongs to the gluconeogenesis factor family.

It localises to the cytoplasm. In terms of biological role, required for morphogenesis under gluconeogenic growth conditions. This Aquifex aeolicus (strain VF5) protein is Putative gluconeogenesis factor.